We begin with the raw amino-acid sequence, 20 residues long: Large ribosomal subunit protein bL31 (20 aa).

Residues Xaa16 and Xaa18 each contribute to the Zn(2+) site.

The protein belongs to the bacterial ribosomal protein bL31 family. Type A subfamily. In terms of assembly, part of the 50S ribosomal subunit. Zn(2+) is required as a cofactor.

Functionally, binds the 23S rRNA. The protein is Large ribosomal subunit protein bL31 (rpmE) of Ectopseudomonas mendocina (Pseudomonas mendocina).